The primary structure comprises 393 residues: Iripin-3 (393 aa).

The first 16 residues, 1-16, serve as a signal peptide directing secretion; sequence MKVITAFLSVFVLCSA. 2 N-linked (GlcNAc...) asparagine glycosylation sites follow: asparagine 104 and asparagine 265.

The protein belongs to the serpin family. Interacts with human KLKB1. Interacts with human ST14. Interacts with human F2 (thrombin). As to expression, saliva (at protein level). Expressed in salivary gland. Expressed in ovary during blood feeding.

Its subcellular location is the secreted. Its function is as follows. Serine protease inhibitor that modulates blood feeding of ticks on vertebrate species. Moderately inhibits host plasma kallikrein (KLKB1), matriptase (ST14), trypsin, plasmin (PLG), thrombin (F2) and coagulation factor VIIa (F7). Slightly inhibits host alpha-chymotrypsin, tPA/tissue-type plasminogen activator (PLAT), uPA/urokinase-type plasminogen activator (PLAU) and coagulation factor XIIa (F12). Slightly inhibits the extrinsic pathway while not affecting the intrinsic and common pathways of host blood coagulation. Decreases synthesis and secretion of IL6 by mouse bone marrow-derived macrophages. Decreases viability of mouse B- and T-cells. Decreases proliferation of mouse CD4+ T-cells in response to stimulation. Inhibits Th1 immune responses in mouse cells. Promotes differentiation of mouse regulatory T-cells. This chain is Iripin-3, found in Ixodes ricinus (Common tick).